We begin with the raw amino-acid sequence, 97 residues long: Unclassified hydrophobin F (97 aa).

Positions methionine 1–alanine 17 are cleaved as a signal peptide. 4 disulfide bridges follow: cysteine 24–cysteine 75, cysteine 39–cysteine 67, cysteine 40–cysteine 58, and cysteine 76–cysteine 85.

Its subcellular location is the secreted. It is found in the cell wall. Functionally, aerial growth, conidiation, and dispersal of filamentous fungi in the environment rely upon a capability of their secreting small amphipathic proteins called hydrophobins (HPBs) with low sequence identity. Class I can self-assemble into an outermost layer of rodlet bundles on aerial cell surfaces, conferring cellular hydrophobicity that supports fungal growth, development and dispersal; whereas Class II form highly ordered films at water-air interfaces through intermolecular interactions but contribute nothing to the rodlet structure. In P.expansum, hydrophobins contribute to germination, tolerance to cold stress and mycotoxins patulin and citrinin production. HfbC, HfbD, HfbE, and HfbF have functional redundancy in fungal surface hydrophobicity. This chain is Unclassified hydrophobin F, found in Penicillium expansum (Blue mold rot fungus).